A 214-amino-acid chain; its full sequence is UPF0502 protein Spro_2794 (214 aa).

The protein belongs to the UPF0502 family.

This is UPF0502 protein Spro_2794 from Serratia proteamaculans (strain 568).